The primary structure comprises 163 residues: Peptidyl-prolyl cis-trans isomerase (163 aa).

In terms of domain architecture, PPIase cyclophilin-type spans 5 to 162 (YFDVSSNGKP…SVLKIEDCGT (158 aa)).

Belongs to the cyclophilin-type PPIase family. PPIase A subfamily.

The protein resides in the cytoplasm. The enzyme catalyses [protein]-peptidylproline (omega=180) = [protein]-peptidylproline (omega=0). Binds cyclosporin A (CsA). CsA mediates some of its effects via an inhibitory action on PPIase. In terms of biological role, PPIases accelerate the folding of proteins. It catalyzes the cis-trans isomerization of proline imidic peptide bonds in oligopeptides. The protein is Peptidyl-prolyl cis-trans isomerase (PIG28) of Uromyces fabae (Rust fungus).